The following is a 221-amino-acid chain: Carbonic anhydrase (221 aa).

Zn(2+) is bound by residues cysteine 38, aspartate 40, histidine 99, and cysteine 102.

This sequence belongs to the beta-class carbonic anhydrase family. It depends on Zn(2+) as a cofactor.

It catalyses the reaction hydrogencarbonate + H(+) = CO2 + H2O. The chain is Carbonic anhydrase (cynT) from Helicobacter pylori (strain J99 / ATCC 700824) (Campylobacter pylori J99).